The chain runs to 652 residues: DNA ligase (652 aa).

Residues 29 to 33 (DSEYD), 78 to 79 (SL), and E107 each bind NAD(+). K109 acts as the N6-AMP-lysine intermediate in catalysis. NAD(+)-binding residues include R130, E164, K278, and K302. C395, C398, C413, and C418 together coordinate Zn(2+). A BRCT domain is found at 577 to 652 (VADAALSGLT…VRDEAWLESL (76 aa)).

It belongs to the NAD-dependent DNA ligase family. LigA subfamily. Requires Mg(2+) as cofactor. It depends on Mn(2+) as a cofactor.

It carries out the reaction NAD(+) + (deoxyribonucleotide)n-3'-hydroxyl + 5'-phospho-(deoxyribonucleotide)m = (deoxyribonucleotide)n+m + AMP + beta-nicotinamide D-nucleotide.. Functionally, DNA ligase that catalyzes the formation of phosphodiester linkages between 5'-phosphoryl and 3'-hydroxyl groups in double-stranded DNA using NAD as a coenzyme and as the energy source for the reaction. It is essential for DNA replication and repair of damaged DNA. The chain is DNA ligase from Streptococcus pneumoniae (strain CGSP14).